The following is a 275-amino-acid chain: NH(3)-dependent NAD(+) synthetase (275 aa).

46-53 (GISGGQDS) serves as a coordination point for ATP. Mg(2+) is bound at residue aspartate 52. Arginine 140 contributes to the deamido-NAD(+) binding site. Threonine 160 provides a ligand contact to ATP. Glutamate 165 contributes to the Mg(2+) binding site. Residues lysine 173 and aspartate 180 each contribute to the deamido-NAD(+) site. Positions 189 and 211 each coordinate ATP. Residue 260-261 (HK) participates in deamido-NAD(+) binding.

The protein belongs to the NAD synthetase family. As to quaternary structure, homodimer.

It catalyses the reaction deamido-NAD(+) + NH4(+) + ATP = AMP + diphosphate + NAD(+) + H(+). Its pathway is cofactor biosynthesis; NAD(+) biosynthesis; NAD(+) from deamido-NAD(+) (ammonia route): step 1/1. In terms of biological role, catalyzes the ATP-dependent amidation of deamido-NAD to form NAD. Uses ammonia as a nitrogen source. The polypeptide is NH(3)-dependent NAD(+) synthetase (Salmonella typhi).